A 562-amino-acid chain; its full sequence is NAD-dependent malic enzyme (562 aa).

Residue tyrosine 101 is the Proton donor of the active site. Arginine 154 is an NAD(+) binding site. Residue lysine 172 is the Proton acceptor of the active site. A divalent metal cation contacts are provided by glutamate 243, aspartate 244, and aspartate 267. Residues aspartate 267 and asparagine 415 each coordinate NAD(+).

This sequence belongs to the malic enzymes family. As to quaternary structure, homotetramer. Mg(2+) is required as a cofactor. Requires Mn(2+) as cofactor.

It catalyses the reaction (S)-malate + NAD(+) = pyruvate + CO2 + NADH. The catalysed reaction is oxaloacetate + H(+) = pyruvate + CO2. The protein is NAD-dependent malic enzyme of Shewanella baltica (strain OS155 / ATCC BAA-1091).